The following is a 604-amino-acid chain: Aspartate--tRNA(Asp/Asn) ligase (604 aa).

Glu177 is an L-aspartate binding site. An aspartate region spans residues Gln201–Lys204. An L-aspartate-binding site is contributed by Arg223. Residues Arg223 to Glu225 and Gln232 contribute to the ATP site. His457 is an L-aspartate binding site. Glu495 provides a ligand contact to ATP. Arg502 is a binding site for L-aspartate. Residue Gly547–Arg550 coordinates ATP.

It belongs to the class-II aminoacyl-tRNA synthetase family. Type 1 subfamily. As to quaternary structure, homodimer.

It is found in the cytoplasm. It carries out the reaction tRNA(Asx) + L-aspartate + ATP = L-aspartyl-tRNA(Asx) + AMP + diphosphate. In terms of biological role, aspartyl-tRNA synthetase with relaxed tRNA specificity since it is able to aspartylate not only its cognate tRNA(Asp) but also tRNA(Asn). Reaction proceeds in two steps: L-aspartate is first activated by ATP to form Asp-AMP and then transferred to the acceptor end of tRNA(Asp/Asn). This chain is Aspartate--tRNA(Asp/Asn) ligase, found in Synechococcus sp. (strain RCC307).